A 270-amino-acid polypeptide reads, in one-letter code: NADPH-dependent aldehyde reductase-like protein, chloroplastic (270 aa).

A chloroplast-targeting transit peptide spans 1–53 (MSTHSSISQPPLPLAGRVAIVTGSSRGIGRAIAIHLAELGARIVINYTSKAAD). 26 to 50 (RGIGRAIAIHLAELGARIVINYTSK) contacts NADP(+). Residue S165 participates in substrate binding. Y178 functions as the Proton acceptor in the catalytic mechanism.

The protein belongs to the short-chain dehydrogenases/reductases (SDR) family.

It localises to the plastid. Its subcellular location is the chloroplast. Its function is as follows. Aldehyde reductase that catalyzes the reduction of the aldehyde carbonyl groups on saturated and alpha,beta-unsaturated aldehydes with more than 5 carbons. The chain is NADPH-dependent aldehyde reductase-like protein, chloroplastic from Arabidopsis thaliana (Mouse-ear cress).